A 102-amino-acid polypeptide reads, in one-letter code: Small ribosomal subunit protein uS10 (102 aa).

The protein belongs to the universal ribosomal protein uS10 family. In terms of assembly, part of the 30S ribosomal subunit.

Functionally, involved in the binding of tRNA to the ribosomes. The chain is Small ribosomal subunit protein uS10 from Clostridium kluyveri (strain NBRC 12016).